We begin with the raw amino-acid sequence, 1241 residues long: RNA polymerase II C-terminal domain phosphatase-like 3 (1241 aa).

Disordered regions lie at residues 361 to 402, 428 to 470, 505 to 525, 578 to 598, 677 to 702, 720 to 800, and 852 to 885; these read DHDA…TTEG, VFKT…HLIY, ISAP…RDPR, KRQK…WLED, AIQK…VSTP, VLQD…QNGT, and TERD…GPTR. A compositionally biased stretch (polar residues) spans 368–378; that stretch reads PSPTRETTPSL. The span at 441 to 466 shows a compositional bias: low complexity; sequence GEPNDGNGDVGGEVSSSVVKSSNPGS. The segment covering 677–686 has biased composition (basic and acidic residues); the sequence is AIQKPMDPRR. 2 stretches are compositionally biased toward polar residues: residues 691 to 702 and 791 to 800; these read PGSSVQPGVSTP and PRQNISQNGT. Low complexity predominate over residues 871–881; the sequence is SVSAASVTAAA. An FCP1 homology domain is found at 923–1103; the sequence is FASQKLSLVL…GLLGPSLLEL (181 aa). One can recognise a BRCT domain in the interval 1146 to 1239; the sequence is EQRKILAGCR…QRANENLYAI (94 aa).

As to quaternary structure, interacts with RAP74. It depends on Mg(2+) as a cofactor. Co(2+) is required as a cofactor. The cofactor is Mn(2+).

Its subcellular location is the nucleus. The catalysed reaction is O-phospho-L-seryl-[protein] + H2O = L-seryl-[protein] + phosphate. The enzyme catalyses O-phospho-L-threonyl-[protein] + H2O = L-threonyl-[protein] + phosphate. Functionally, completely dephosphorylates 'Ser-2', and partially 'Ser-5' and 'Ser-7' of the heptad repeats YSPTSPS in the C-terminal domain (CTD) of the largest RNA polymerase II subunit (RPB1). Involved in defense response. Acts as a negative regulator of immune gene expression and immunity to pathogen infections. Preferentially dephosphorylates 'Ser-2' of RNA polymerase II CTD. This counterregulates the MAP kinase (MAPK) or cyclin-dependent kinase C (CDKC)-mediated phosphorylation of CTD in response to pathogens and upon perception of microbe-associated molecular patterns (MAMPs). MAPKs phosphorylate and activate CDKCs, which are CTD kinases that positively regulate plant innate immunity. Acts as a negative regulator of stress gene transcription involved in abscisic acid (ABA) mediated signaling pathway and cold resistance. Acts as a post-transcriptional gene silencing (PTGS) suppressor. This Arabidopsis thaliana (Mouse-ear cress) protein is RNA polymerase II C-terminal domain phosphatase-like 3.